A 559-amino-acid chain; its full sequence is Probable inorganic carbon transporter subunit DabB1 (559 aa).

Transmembrane regions (helical) follow at residues 4 to 24 (LQWLIPLLPLLSALLVQLFAA), 33 to 53 (LSVALGTLTVIVAAYQLVAYI), 76 to 96 (LSSIMSLVVAGISLIVHVYSI), 106 to 126 (PRFFLLLDLMTASILLMVAAG), 173 to 193 (LVLAAVLLYQTYGAIDFPTLF), 202 to 222 (ATIMGLPTAITAAFLVALSAF), 240 to 260 (GPTPVSALMHAGIVNAGGFII), 273 to 293 (VLHMLFVVGLITALVGSVLML), 310 to 330 (MGFMVMECGLGAFSLAVFHLI), 375 to 395 (LPWLFIGLATLVVPLFILVIA), 408 to 428 (GAIVLLFFGWITGVQVLFATH), 440 to 460 (MMILLSFTLIVVGYTFIGHAF), and 487 to 507 (GLVFLLALIVVAGWFSSYLAS).

Belongs to the inorganic carbon transporter (TC 9.A.2) DabB family. Forms a complex with DabA1.

It is found in the cell inner membrane. Part of an energy-coupled inorganic carbon pump. The protein is Probable inorganic carbon transporter subunit DabB1 of Halothiobacillus neapolitanus (strain ATCC 23641 / c2) (Thiobacillus neapolitanus).